The primary structure comprises 404 residues: uncharacterized protein (404 aa).

Helical transmembrane passes span 3–23 (IIAK…PITE), 43–63 (TTQI…LTLG), 73–93 (PVVL…IFAP), 95–115 (IETL…GSVI), 135–155 (SLSP…GYII), 162–182 (YTFV…CKIL), 216–236 (IIGA…FIFI), 248–268 (KLAF…GYLI), 280–300 (ILGL…ALIL), 309–329 (IAVI…NLLI), 346–366 (TAGS…TFLV), and 377–397 (FALL…YILI).

It belongs to the major facilitator superfamily. Bcr/CmlA family.

It localises to the cell inner membrane. This is an uncharacterized protein from Rickettsia bellii (strain RML369-C).